The chain runs to 229 residues: Uracil-DNA glycosylase (229 aa).

The Proton acceptor role is filled by aspartate 64.

This sequence belongs to the uracil-DNA glycosylase (UDG) superfamily. UNG family.

The protein localises to the cytoplasm. The catalysed reaction is Hydrolyzes single-stranded DNA or mismatched double-stranded DNA and polynucleotides, releasing free uracil.. Functionally, excises uracil residues from the DNA which can arise as a result of misincorporation of dUMP residues by DNA polymerase or due to deamination of cytosine. The chain is Uracil-DNA glycosylase from Geobacillus thermodenitrificans (strain NG80-2).